The primary structure comprises 402 residues: Pyridinium-3,5-bisthiocarboxylic acid mononucleotide nickel insertion protein (402 aa).

This sequence belongs to the LarC family.

It carries out the reaction Ni(II)-pyridinium-3,5-bisthiocarboxylate mononucleotide = pyridinium-3,5-bisthiocarboxylate mononucleotide + Ni(2+). Involved in the biosynthesis of a nickel-pincer cofactor ((SCS)Ni(II) pincer complex). Binds Ni(2+), and functions in nickel delivery to pyridinium-3,5-bisthiocarboxylic acid mononucleotide (P2TMN), to form the mature cofactor. Is thus probably required for the activation of nickel-pincer cofactor-dependent enzymes. The sequence is that of Pyridinium-3,5-bisthiocarboxylic acid mononucleotide nickel insertion protein from Desulfitobacterium hafniense (strain Y51).